The sequence spans 653 residues: Sodium-dependent phosphate transporter 2 (653 aa).

A topological domain (extracellular) is located at residue Met-1. The helical transmembrane segment at 2 to 22 threads the bilayer; sequence VLVEYLWMVIVGFIIAFILAF. The Cytoplasmic segment spans residues 23 to 46; sequence SVGANDVANSFGTAVGSGVVTLRQ. The chain crosses the membrane as a helical span at residues 47–67; the sequence is ACILASIFETTGSVLLGAKVG. The Extracellular portion of the chain corresponds to 68–86; that stretch reads ETIRKGIIDVNLYNNTVDL. N-linked (GlcNAc...) asparagine glycosylation is present at Asn-81. The helical transmembrane segment at 87-107 threads the bilayer; sequence LMAGEVSAMVGSAVWQLIASF. Topologically, residues 108-109 are cytoplasmic; it reads LR. A helical transmembrane segment spans residues 110–130; the sequence is LPISGTHCIVGATIGFSLVAI. Residues 131–142 lie on the Extracellular side of the membrane; it reads GTHGVQWMQLVK. Residues 143–163 traverse the membrane as a helical segment; sequence IVASWFISPLLSGLMSGALFL. Residues 164 to 187 are Cytoplasmic-facing; that stretch reads MIKFFILKKEDPVPNGLKALPVFY. The chain crosses the membrane as a helical span at residues 188 to 208; the sequence is AATIGINVFSILYTGAPLLGL. Topologically, residues 209 to 217 are extracellular; it reads ESFPVWATA. Residues 218 to 238 form a helical membrane-spanning segment; the sequence is LLSIGIAIIFALIVWFFVCPW. At 239 to 483 the chain is on the cytoplasmic side; that stretch reads MKKKIASRLK…EDKEEKDKSE (245 aa). Residues 484-504 traverse the membrane as a helical segment; that stretch reads VHLLFHFLQILTACFGSFAHG. Residues 505–532 are Extracellular-facing; the sequence is GNDVSNAIGPLVALWLIYEQGGVMQEAS. Residues 533-553 traverse the membrane as a helical segment; the sequence is TPVWLLLYGGVGICAGLWVWG. At 554 to 572 the chain is on the cytoplasmic side; sequence RRVIQTMGKDLTPITPSSG. The chain crosses the membrane as a helical span at residues 573–587; sequence FTIELASAFTVVVAS. At 588–594 the chain is on the extracellular side; that stretch reads NIGLPIS. The helical transmembrane segment at 595–610 threads the bilayer; the sequence is TTHCKVGSVVAVGWIR. At 611–622 the chain is on the cytoplasmic side; sequence SRKAVDWRLFRN. A helical transmembrane segment spans residues 623 to 643; the sequence is IFLAWFVTVPVAGLFSAGVMA. Over 644–653 the chain is Extracellular; that stretch reads ILQYGILPYV.

Belongs to the inorganic phosphate transporter (PiT) (TC 2.A.20) family. As to quaternary structure, homodimer.

Its subcellular location is the cell membrane. The protein localises to the apical cell membrane. It carries out the reaction 2 Na(+)(out) + phosphate(out) = 2 Na(+)(in) + phosphate(in). In terms of biological role, sodium-phosphate symporter which preferentially transports the monovalent form of phosphate with a stoichiometry of two sodium ions per phosphate ion. The chain is Sodium-dependent phosphate transporter 2 (slc20a2) from Xenopus tropicalis (Western clawed frog).